Reading from the N-terminus, the 332-residue chain is Isopentenyl phosphate kinase (332 aa).

M1 carries the N-acetylmethionine modification. 18–22 contributes to the ATP binding site; it reads KLGGA. A96 provides a ligand contact to substrate. G97 is a binding site for ATP. Substrate-binding residues include H101 and G202. ATP contacts are provided by residues D223, 228–233, G279, and K283; that span reads YDRPPS.

It belongs to the isopentenyl phosphate kinase family.

It localises to the cytoplasm. Its subcellular location is the cytosol. The catalysed reaction is isopentenyl phosphate + ATP = isopentenyl diphosphate + ADP. In terms of biological role, catalyzes the formation of isopentenyl diphosphate (IPP), the universal five-carbon isoprenoid building block of all natural isoprenoids. Acts in parallel with the mevalonate (MVA) pathway and plays an important role in regulating the formation of both MVA and methylerythritol phosphate (MEP) pathway-derived terpenoid compounds by controlling the ratio of isopentenyl phosphate (IP) and dimethylallyl phosphate (DMAP) to isopentenyl diphosphate (IPP) and dimethylallyl diphosphate (DMAPP). Controls the levels of IP and DMAP that are competitive inhibitors of the farnesyl diphosphate synthase. Regulates the production of farnesyl diphosphate-derived terpenoids in the cytosol, and geranyl diphosphate-derived compounds in plastids. This Arabidopsis thaliana (Mouse-ear cress) protein is Isopentenyl phosphate kinase.